A 127-amino-acid chain; its full sequence is Holo-[acyl-carrier-protein] synthase (127 aa).

Mg(2+) contacts are provided by Asp-8 and Glu-57.

This sequence belongs to the P-Pant transferase superfamily. AcpS family. Requires Mg(2+) as cofactor.

Its subcellular location is the cytoplasm. The enzyme catalyses apo-[ACP] + CoA = holo-[ACP] + adenosine 3',5'-bisphosphate + H(+). Its function is as follows. Transfers the 4'-phosphopantetheine moiety from coenzyme A to a Ser of acyl-carrier-protein. This chain is Holo-[acyl-carrier-protein] synthase, found in Ruthia magnifica subsp. Calyptogena magnifica.